We begin with the raw amino-acid sequence, 256 residues long: Small ribosomal subunit protein uS2 (256 aa).

The protein belongs to the universal ribosomal protein uS2 family.

The protein is Small ribosomal subunit protein uS2 of Ruegeria sp. (strain TM1040) (Silicibacter sp.).